We begin with the raw amino-acid sequence, 232 residues long: Large ribosomal subunit protein uL1 (232 aa).

Belongs to the universal ribosomal protein uL1 family. Part of the 50S ribosomal subunit.

In terms of biological role, binds directly to 23S rRNA. The L1 stalk is quite mobile in the ribosome, and is involved in E site tRNA release. Its function is as follows. Protein L1 is also a translational repressor protein, it controls the translation of the L11 operon by binding to its mRNA. The polypeptide is Large ribosomal subunit protein uL1 (Stenotrophomonas maltophilia (strain K279a)).